Consider the following 424-residue polypeptide: uncharacterized protein (424 aa).

Transmembrane regions (helical) follow at residues 9-29 (ITWI…GILI), 41-61 (ASLF…GTLA), 86-106 (GAIL…IIAL), 119-139 (ADWQ…LLHM), 148-168 (ISTL…AVSL), 184-204 (WSAA…WEMI), 222-242 (LFLA…VTVG), 270-290 (VTVC…IAGF), 320-340 (VLTA…LFQI), 345-365 (LLKG…AAAL), and 377-397 (MALG…WALL).

Belongs to the amino acid-polyamine-organocation (APC) superfamily.

It localises to the cell membrane. This is an uncharacterized protein from Bacillus subtilis (strain 168).